A 636-amino-acid polypeptide reads, in one-letter code: tRNA 5-methylaminomethyl-2-thiouridine biosynthesis bifunctional protein MnmC (636 aa).

The interval 1 to 202 is tRNA (mnm(5)s(2)U34)-methyltransferase; that stretch reads MTVSKILKQV…ERAALRAQSH (202 aa). An FAD-dependent cmnm(5)s(2)U34 oxidoreductase region spans residues 227 to 636; it reads IGGGVASACL…GKALEMSGKS (410 aa).

In the N-terminal section; belongs to the methyltransferase superfamily. tRNA (mnm(5)s(2)U34)-methyltransferase family. It in the C-terminal section; belongs to the DAO family. FAD is required as a cofactor.

The protein localises to the cytoplasm. It carries out the reaction 5-aminomethyl-2-thiouridine(34) in tRNA + S-adenosyl-L-methionine = 5-methylaminomethyl-2-thiouridine(34) in tRNA + S-adenosyl-L-homocysteine + H(+). Catalyzes the last two steps in the biosynthesis of 5-methylaminomethyl-2-thiouridine (mnm(5)s(2)U) at the wobble position (U34) in tRNA. Catalyzes the FAD-dependent demodification of cmnm(5)s(2)U34 to nm(5)s(2)U34, followed by the transfer of a methyl group from S-adenosyl-L-methionine to nm(5)s(2)U34, to form mnm(5)s(2)U34. The sequence is that of tRNA 5-methylaminomethyl-2-thiouridine biosynthesis bifunctional protein MnmC from Shewanella halifaxensis (strain HAW-EB4).